A 427-amino-acid chain; its full sequence is UDP-N-acetyl-D-mannosamine dehydrogenase (427 aa).

NAD(+) contacts are provided by tyrosine 19, isoleucine 20, aspartate 39, arginine 44, threonine 91, and threonine 130. 8 residues coordinate UDP-N-acetyl-alpha-D-mannosaminouronate: arginine 155, valine 156, lysine 207, asparagine 211, arginine 214, histidine 245, arginine 247, and glycine 258. Residue lysine 207 is the Proton donor/acceptor of the active site. The active-site Nucleophile is the cysteine 261. Residues tyrosine 318 and lysine 319 each coordinate UDP-N-acetyl-alpha-D-mannosaminouronate. Residue arginine 326 participates in NAD(+) binding. Lysine 404 contributes to the UDP-N-acetyl-alpha-D-mannosaminouronate binding site.

Belongs to the UDP-glucose/GDP-mannose dehydrogenase family. Homotetramer; probably dimer of dimers.

The catalysed reaction is UDP-N-acetyl-alpha-D-mannosamine + 2 NAD(+) + H2O = UDP-N-acetyl-alpha-D-mannosaminouronate + 2 NADH + 3 H(+). Functionally, catalyzes the four-electron oxidation of UDP-N-acetyl-D-mannosamine (UDP-ManNAc), reducing NAD(+) and releasing UDP-N-acetylmannosaminuronic acid (UDP-ManNAcA). This is UDP-N-acetyl-D-mannosamine dehydrogenase (wecC) from Methanococcus maripaludis (strain C7 / ATCC BAA-1331).